We begin with the raw amino-acid sequence, 605 residues long: Elongation factor 4 (605 aa).

The tr-type G domain maps to 11-193 (EKIRNFSIIA…QIVEKVPAPT (183 aa)). GTP contacts are provided by residues 23–28 (DHGKST) and 140–143 (NKID).

Belongs to the TRAFAC class translation factor GTPase superfamily. Classic translation factor GTPase family. LepA subfamily.

Its subcellular location is the cell membrane. It catalyses the reaction GTP + H2O = GDP + phosphate + H(+). Functionally, required for accurate and efficient protein synthesis under certain stress conditions. May act as a fidelity factor of the translation reaction, by catalyzing a one-codon backward translocation of tRNAs on improperly translocated ribosomes. Back-translocation proceeds from a post-translocation (POST) complex to a pre-translocation (PRE) complex, thus giving elongation factor G a second chance to translocate the tRNAs correctly. Binds to ribosomes in a GTP-dependent manner. This Streptococcus pyogenes serotype M4 (strain MGAS10750) protein is Elongation factor 4.